Here is a 406-residue protein sequence, read N- to C-terminus: Acetylornithine aminotransferase (406 aa).

Pyridoxal 5'-phosphate-binding positions include 113–114 (GT) and F145. R148 contacts N(2)-acetyl-L-ornithine. Residue 233-236 (DEIQ) participates in pyridoxal 5'-phosphate binding. N6-(pyridoxal phosphate)lysine is present on K262. S290 is a binding site for N(2)-acetyl-L-ornithine. T291 is a pyridoxal 5'-phosphate binding site.

This sequence belongs to the class-III pyridoxal-phosphate-dependent aminotransferase family. ArgD subfamily. As to quaternary structure, homodimer. Requires pyridoxal 5'-phosphate as cofactor.

The protein localises to the cytoplasm. The catalysed reaction is N(2)-acetyl-L-ornithine + 2-oxoglutarate = N-acetyl-L-glutamate 5-semialdehyde + L-glutamate. Its pathway is amino-acid biosynthesis; L-arginine biosynthesis; N(2)-acetyl-L-ornithine from L-glutamate: step 4/4. The sequence is that of Acetylornithine aminotransferase from Leptospira interrogans serogroup Icterohaemorrhagiae serovar Lai (strain 56601).